The following is a 104-amino-acid chain: MSEFSGVTVVREANIYFNGAVASHTVLFPDGSKKTLGIMQPGEYTFSTGAAELMEILSGELDLQLAGETGWRRIGGGQSFEVPANSSFTMKVQTVSDYCCSFLS.

Belongs to the nucleoside phosphorylase PpnP family.

It carries out the reaction a purine D-ribonucleoside + phosphate = a purine nucleobase + alpha-D-ribose 1-phosphate. The enzyme catalyses adenosine + phosphate = alpha-D-ribose 1-phosphate + adenine. It catalyses the reaction cytidine + phosphate = cytosine + alpha-D-ribose 1-phosphate. The catalysed reaction is guanosine + phosphate = alpha-D-ribose 1-phosphate + guanine. It carries out the reaction inosine + phosphate = alpha-D-ribose 1-phosphate + hypoxanthine. The enzyme catalyses thymidine + phosphate = 2-deoxy-alpha-D-ribose 1-phosphate + thymine. It catalyses the reaction uridine + phosphate = alpha-D-ribose 1-phosphate + uracil. The catalysed reaction is xanthosine + phosphate = alpha-D-ribose 1-phosphate + xanthine. Functionally, catalyzes the phosphorolysis of diverse nucleosides, yielding D-ribose 1-phosphate and the respective free bases. Can use uridine, adenosine, guanosine, cytidine, thymidine, inosine and xanthosine as substrates. Also catalyzes the reverse reactions. This Trichlorobacter lovleyi (strain ATCC BAA-1151 / DSM 17278 / SZ) (Geobacter lovleyi) protein is Pyrimidine/purine nucleoside phosphorylase.